The primary structure comprises 335 residues: Glyceraldehyde-3-phosphate dehydrogenase 2 (335 aa).

Residues Arg12–Ile13, Asp35, Arg79, and Ser121 each bind NAD(+). Residues Ser152–Thr154 and Thr183 contribute to the D-glyceraldehyde 3-phosphate site. The active-site Nucleophile is Cys153. An NAD(+)-binding site is contributed by Asn184. Residues Arg198, Thr211–Gly212, and Arg234 contribute to the D-glyceraldehyde 3-phosphate site. Position 316 (Asn316) interacts with NAD(+).

The protein belongs to the glyceraldehyde-3-phosphate dehydrogenase family. In terms of assembly, homotetramer.

It localises to the cytoplasm. It carries out the reaction D-glyceraldehyde 3-phosphate + phosphate + NAD(+) = (2R)-3-phospho-glyceroyl phosphate + NADH + H(+). Its pathway is carbohydrate degradation; glycolysis; pyruvate from D-glyceraldehyde 3-phosphate: step 1/5. Inhibited by pentalenolactone. Functionally, catalyzes the oxidative phosphorylation of glyceraldehyde 3-phosphate (G3P) to 1,3-bisphosphoglycerate (BPG) using the cofactor NAD. The first reaction step involves the formation of a hemiacetal intermediate between G3P and a cysteine residue, and this hemiacetal intermediate is then oxidized to a thioester, with concomitant reduction of NAD to NADH. The reduced NADH is then exchanged with the second NAD, and the thioester is attacked by a nucleophilic inorganic phosphate to produce BPG. This Streptomyces avermitilis (strain ATCC 31267 / DSM 46492 / JCM 5070 / NBRC 14893 / NCIMB 12804 / NRRL 8165 / MA-4680) protein is Glyceraldehyde-3-phosphate dehydrogenase 2 (gap2).